A 158-amino-acid chain; its full sequence is Transcription elongation factor GreA (158 aa).

A coiled-coil region spans residues 47 to 74 (NSEYDEAKNEQAFTEGRIIQLENMLKNA).

It belongs to the GreA/GreB family.

Necessary for efficient RNA polymerase transcription elongation past template-encoded arresting sites. The arresting sites in DNA have the property of trapping a certain fraction of elongating RNA polymerases that pass through, resulting in locked ternary complexes. Cleavage of the nascent transcript by cleavage factors such as GreA or GreB allows the resumption of elongation from the new 3'terminus. GreA releases sequences of 2 to 3 nucleotides. In Clostridium perfringens (strain ATCC 13124 / DSM 756 / JCM 1290 / NCIMB 6125 / NCTC 8237 / Type A), this protein is Transcription elongation factor GreA.